Consider the following 320-residue polypeptide: N-acetylneuraminate lyase (320 aa).

The aceneuramate site is built by threonine 51 and threonine 52. Tyrosine 143 acts as the Proton donor in catalysis. Catalysis depends on lysine 173, which acts as the Schiff-base intermediate with substrate. Positions 175, 199, 201, 202, and 218 each coordinate aceneuramate. The residue at position 308 (serine 308) is a Phosphoserine.

The protein belongs to the DapA family. NanA subfamily. In terms of assembly, homotetramer.

The protein localises to the cytoplasm. It catalyses the reaction aceneuramate = aldehydo-N-acetyl-D-mannosamine + pyruvate. It participates in amino-sugar metabolism; N-acetylneuraminate degradation. Functionally, catalyzes the cleavage of N-acetylneuraminic acid (sialic acid) to form pyruvate and N-acetylmannosamine via a Schiff base intermediate. It prevents sialic acids from being recycled and returning to the cell surface. Involved in the N-glycolylneuraminic acid (Neu5Gc) degradation pathway. This chain is N-acetylneuraminate lyase, found in Mus musculus (Mouse).